A 446-amino-acid polypeptide reads, in one-letter code: Argininosuccinate synthase (446 aa).

ATP is bound by residues 17–25 (AFSGGLDTS) and alanine 43. L-citrulline is bound at residue tyrosine 99. 2 residues coordinate ATP: glycine 129 and threonine 131. Positions 131, 135, and 136 each coordinate L-aspartate. L-citrulline is bound at residue asparagine 135. Aspartate 136 contributes to the ATP binding site. Residues arginine 139 and serine 192 each coordinate L-citrulline. Aspartate 194 provides a ligand contact to ATP. Residues threonine 201, glutamate 203, and glutamate 280 each contribute to the L-citrulline site.

The protein belongs to the argininosuccinate synthase family. Type 2 subfamily. In terms of assembly, homotetramer.

It localises to the cytoplasm. It catalyses the reaction L-citrulline + L-aspartate + ATP = 2-(N(omega)-L-arginino)succinate + AMP + diphosphate + H(+). The protein operates within amino-acid biosynthesis; L-arginine biosynthesis; L-arginine from L-ornithine and carbamoyl phosphate: step 2/3. The chain is Argininosuccinate synthase from Polaromonas sp. (strain JS666 / ATCC BAA-500).